A 278-amino-acid polypeptide reads, in one-letter code: Secoisolariciresinol dehydrogenase (278 aa).

NAD(+) is bound by residues 23 to 28 (GGAGGI), aspartate 47, valine 73, and asparagine 99. Serine 104 and serine 164 together coordinate substrate. The Proton donor/acceptor role is filled by tyrosine 167. 2 residues coordinate NAD(+): lysine 171 and valine 200.

It belongs to the short-chain dehydrogenases/reductases (SDR) family. Homotetramer.

The enzyme catalyses (-)-secoisolariciresinol + 2 NAD(+) = (-)-matairesinol + 2 NADH + 2 H(+). Its function is as follows. Oxidoreductase involved in lignan biosynthesis. Catalyzes the stereospecific conversion of (-)-secoisolariciresinol to (-)-matairesinol via a lactol intermediate. This Podophyllum peltatum (American mandrake) protein is Secoisolariciresinol dehydrogenase.